The primary structure comprises 1414 residues: MKALLDLFKQVQQEEVFDAIKIGLASPDKIRSWSFGEVKKPETINYRTFKPERDGLFCAKIFGPIKDYECLCGKYKRLKHRGVICEKCGVEVTLAKVRRERMGHIELASPVAHIWFLKSLPSRLGMVLDMTLRDIERVLYFEAYVVIEPGMTPLKARQIMTEEDYYNKVEEYGDEFRAEMGAEGVRELLRAINIDEQVETLRTELKNTGSEAKIKKYAKRLKVLEAFQRSGIKPEWMILEVLPVLPPELRPLVPLDGGRFATSDLNDLYRRVINRNNRLKRLLELKAPEIIVRNEKRMLQEAVDSLLDNGRRGKAMTGANKRPLKSLADMIKGKGGRFRQNLLGKRVDYSGRSVIVVGPTLKLHQCGLPKLMALELFKPFIFNKLEVMGVATTIKAAKKEVENQTAVVWDILEEVIREHPVMLNRAPTLHRLGIQAFEPVLIEGKAIQLHPLVCAAFNADFDGDQMAVHVPLSLEAQMEARTLMLASNNVLFPANGDPSIVPSQDIVLGLYYATREAVNGKGEGLSFTGVSEVIRAYENKEVELASRVNVRITEMVHNEDTSEGAPPFVPKISLYATTVGRAILSEILPHGLPFSVLNKPLKKKEISRLINTAFRKCGLRATVVFADQLMQSGFRLATRAGISICVDDMLVPPQKETIVGDAAKKVKEYDRQYMSGLVTAQERYNNVVDIWSATSEAVGKAMMEQLSTEPVTDRDGKETRQESFNSIYMMADSGARGSAVQIRQLAGMRGLMAKPDGSIIETPITANFREGLNVLQYFISTHGARKGLADTALKTANSGYLTRRLVDVTQDLVVVEDDCGTSNGVAMKALVEGGEVVEALRDRILGRVAVADVVNPETQETVYESGTLLDETAVEEIERLGIDEVRVRTPLTCETRYGLCAACYGRDLGRGSLVNVGEAVGVIAAQSIGEPGTQLTMRTFHIGGAASRAAVASSVEAKSNGIVRFTATMRYVTNAKGEQIVISRSGEAMITDDFGRERERHKVPYGATLLQLDGVTIKAGTQLATWDPLTRPIITEYGGTVKFENVEEGVTVAKQIDDVTGLSTLVVIDVKRRGSQASKSVRPQVKLLDANGDEVKIPGTEHAVQIGFQVGALITVKDGQQVQVGEVLARIPTEAQKTRDITGGLPRVAELFEARSPKDAGILAEVTGTTSFGKDTKGKQRLVITDLEGNQHEFLIAKEKQVLVHDAQVVNKGEMIVDGPADPHDILRLQGIEALSRYIVDEVQDVYRLQGVKINDKHIEVIVRQMLRRVQITDNGDTRFIPGEQVERSDMLDENDRMIAEDKRPASYDNVLLGITKASLSTDSFISAASFQETTRVLTEAAIMGKRDDLRGLKENVIVGRLIPAGTGLAFHKARKAKESSDRERFDQIAAEEAFDFGTPSAPAEEPQQHPAAE.

4 residues coordinate Zn(2+): C70, C72, C85, and C88. Positions 460, 462, and 464 each coordinate Mg(2+). C819, C893, C900, and C903 together coordinate Zn(2+). Residues 1391 to 1414 (AEEAFDFGTPSAPAEEPQQHPAAE) form a disordered region. Residues 1400–1414 (PSAPAEEPQQHPAAE) show a composition bias toward low complexity.

It belongs to the RNA polymerase beta' chain family. The RNAP catalytic core consists of 2 alpha, 1 beta, 1 beta' and 1 omega subunit. When a sigma factor is associated with the core the holoenzyme is formed, which can initiate transcription. It depends on Mg(2+) as a cofactor. The cofactor is Zn(2+).

The enzyme catalyses RNA(n) + a ribonucleoside 5'-triphosphate = RNA(n+1) + diphosphate. DNA-dependent RNA polymerase catalyzes the transcription of DNA into RNA using the four ribonucleoside triphosphates as substrates. The protein is DNA-directed RNA polymerase subunit beta' of Burkholderia lata (strain ATCC 17760 / DSM 23089 / LMG 22485 / NCIMB 9086 / R18194 / 383).